The sequence spans 229 residues: Homeobox-leucine zipper protein HOX3 (229 aa).

Residues 1-82 form a disordered region; that stretch reads MMGATSPSGL…GPHRPKKLRL (82 aa). A compositionally biased stretch (acidic residues) spans 52 to 68; the sequence is GEEEEFPMGSVEEDEEE. The homeobox DNA-binding region spans 75 to 134; sequence HRPKKLRLSKEQSRLLEESFRLNHTLTPKQKEALAIKLKLRPRQVEVWFQNRRARTKLKQ. Positions 133–177 are leucine-zipper; it reads KQTEMECEYLKRCFGSLTEENRRLQREVEELRAMRVAPPTVLSPH. The disordered stretch occupies residues 198–229; it reads AATGPPAVRPPPSSAAAAAPSPFHPRRPSAAF.

It belongs to the HD-ZIP homeobox family. Class II subfamily. Homodimer. May form a heterodimer with HOX1, HOX2 or HOX7. As to expression, expressed in seedlings, roots, leaves, nodes, internodes, flowers and embryo.

Its subcellular location is the nucleus. Its function is as follows. Probable transcription repressor that binds to the DNA sequence 5'-CAAT[GC]ATTG-3'. This is Homeobox-leucine zipper protein HOX3 (HOX3) from Oryza sativa subsp. indica (Rice).